We begin with the raw amino-acid sequence, 79 residues long: Acyl carrier protein (79 aa).

Residues 2–77 (SDVLERVRKI…DAVKFIQERL (76 aa)) enclose the Carrier domain. An O-(pantetheine 4'-phosphoryl)serine modification is found at serine 37.

The protein belongs to the acyl carrier protein (ACP) family. 4'-phosphopantetheine is transferred from CoA to a specific serine of apo-ACP by AcpS. This modification is essential for activity because fatty acids are bound in thioester linkage to the sulfhydryl of the prosthetic group.

It is found in the cytoplasm. It functions in the pathway lipid metabolism; fatty acid biosynthesis. Carrier of the growing fatty acid chain in fatty acid biosynthesis. The chain is Acyl carrier protein from Phenylobacterium zucineum (strain HLK1).